The sequence spans 342 residues: Tryptophan--tRNA ligase (342 aa).

Residues 19–21 and 27–28 each bind ATP; these read QPS and GN. The 'HIGH' region signature appears at 20–28; sequence PSGELTIGN. Asp-143 is an L-tryptophan binding site. ATP contacts are provided by residues 155–157, Val-194, and 203–207; these read GED and KMSKS. The 'KMSKS' region motif lies at 203-207; that stretch reads KMSKS.

This sequence belongs to the class-I aminoacyl-tRNA synthetase family. Homodimer.

The protein resides in the cytoplasm. The enzyme catalyses tRNA(Trp) + L-tryptophan + ATP = L-tryptophyl-tRNA(Trp) + AMP + diphosphate + H(+). Functionally, catalyzes the attachment of tryptophan to tRNA(Trp). This Yersinia pestis protein is Tryptophan--tRNA ligase.